The following is a 225-amino-acid chain: RNA chaperone ProQ (225 aa).

The interval 103 to 173 is disordered; that stretch reads LEEAKARVQT…APREERHTPV (71 aa). Over residues 109–118 the composition is skewed to low complexity; it reads RVQTQRAAQQ. Residues 137-146 are compositionally biased toward basic residues; sequence RERKPRPQQP. Over residues 147 to 156 the composition is skewed to basic and acidic residues; sequence RRKEGAEQRK.

This sequence belongs to the ProQ family.

It is found in the cytoplasm. Functionally, RNA chaperone with significant RNA binding, RNA strand exchange and RNA duplexing activities. May regulate ProP activity through an RNA-based, post-transcriptional mechanism. The chain is RNA chaperone ProQ from Klebsiella pneumoniae (strain 342).